A 315-amino-acid chain; its full sequence is Olfactory receptor 52R1 (315 aa).

Residues 1-28 are Extracellular-facing; sequence MVLASGNSSSHPVSFILLGIPGLESFQL. N-linked (GlcNAc...) asparagine glycosylation is present at asparagine 7. The helical transmembrane segment at 29–49 threads the bilayer; the sequence is WIAFPFCATYAVAVVGNITLL. Residues 50–57 are Cytoplasmic-facing; sequence HVIRIDHT. A helical transmembrane segment spans residues 58-78; the sequence is LHEPMYLFLAMLAITDLVLSS. The Extracellular segment spans residues 79-102; sequence STQPKMLAIFWFHAHEIQYHACLI. Cysteine 100 and cysteine 192 are oxidised to a cystine. The helical transmembrane segment at 103-123 threads the bilayer; it reads QVFFIHAFSSVESGVLMAMAL. The Cytoplasmic segment spans residues 124–142; sequence DCYVAICFPLRHSSILTPS. The chain crosses the membrane as a helical span at residues 143–163; it reads VVIKLGTIVMLRGLLWVSPFC. Over 164-199 the chain is Extracellular; that stretch reads FMVSRMPFCQHQAIPQSYCEHMAVLKLVCADTSISR. A helical membrane pass occupies residues 200 to 220; the sequence is GNGLFVAFSVAGFDMIVIGMS. At 221-240 the chain is on the cytoplasmic side; that stretch reads YVMILRAVLQLPSGEARLKA. A helical membrane pass occupies residues 241 to 261; that stretch reads FSTRSSHICVILALYIPALFS. Topologically, residues 262 to 276 are extracellular; it reads FLTYRFGHDVPRVVH. The helical transmembrane segment at 277–297 threads the bilayer; it reads ILFANLYLLIPPMLNPIIYGV. Topologically, residues 298–315 are cytoplasmic; the sequence is RTKQIGDRVIQGCCGNIP.

It belongs to the G-protein coupled receptor 1 family.

Its subcellular location is the cell membrane. In terms of biological role, odorant receptor. This is Olfactory receptor 52R1 (OR52R1) from Homo sapiens (Human).